The chain runs to 598 residues: UvrABC system protein C (598 aa).

One can recognise a GIY-YIG domain in the interval 14–91 (DSPGCYLHKD…IQKNMPKYNI (78 aa)). The UVR domain occupies 196–231 (DKIIEDLRSKMLAASEEMAFERAAEYRDLISGIATM).

This sequence belongs to the UvrC family. As to quaternary structure, interacts with UvrB in an incision complex.

It localises to the cytoplasm. In terms of biological role, the UvrABC repair system catalyzes the recognition and processing of DNA lesions. UvrC both incises the 5' and 3' sides of the lesion. The N-terminal half is responsible for the 3' incision and the C-terminal half is responsible for the 5' incision. This chain is UvrABC system protein C, found in Streptococcus pyogenes serotype M28 (strain MGAS6180).